We begin with the raw amino-acid sequence, 133 residues long: Putative biopolymer transport protein ExbD-like 2 (133 aa).

At 1–9 the chain is on the cytoplasmic side; that stretch reads MKKVESMNV. Residues 10–30 traverse the membrane as a helical segment; sequence VPFIDIMLVLLVIVLTTASFV. Topologically, residues 31–133 are periplasmic; that stretch reads QTSKLPISIP…LVEDKKNQKN (103 aa).

It belongs to the ExbD/TolR family.

It localises to the cell inner membrane. The sequence is that of Putative biopolymer transport protein ExbD-like 2 from Helicobacter pylori (strain J99 / ATCC 700824) (Campylobacter pylori J99).